The following is a 322-amino-acid chain: Arginase-1 (322 aa).

Residues 1–27 (MSSKPQSIGVIGAPFSKGQPRGGVEEG) form a disordered region. Residue serine 7 is modified to Phosphoserine. The residue at position 17 (lysine 17) is an N6-succinyllysine. Serine 62 bears the Phosphoserine mark. Lysine 75 is modified (N6-succinyllysine). 4 residues coordinate Mn(2+): histidine 101, aspartate 124, histidine 126, and aspartate 128. Substrate-binding positions include 126 to 130 (HTDIN), 137 to 139 (TGN), and aspartate 183. The residue at position 217 (serine 217) is a Phosphoserine. Positions 232 and 234 each coordinate Mn(2+). 2 residues coordinate substrate: threonine 246 and glutamate 277.

This sequence belongs to the arginase family. In terms of assembly, homotrimer. Interacts with CMTM6. Requires Mn(2+) as cofactor.

The protein localises to the cytoplasm. It catalyses the reaction L-arginine + H2O = urea + L-ornithine. It functions in the pathway nitrogen metabolism; urea cycle; L-ornithine and urea from L-arginine: step 1/1. The protein is Arginase-1 (ARG1) of Bos taurus (Bovine).